We begin with the raw amino-acid sequence, 148 residues long: Cystatin-C (148 aa).

The N-terminal stretch at 1-30 (MVGSPRAPLLLLASLIVALALALAVSPAAA) is a signal peptide. Pyrrolidone carboxylic acid is present on Gln-31. Positions 84–88 (QVVSG) match the Secondary area of contact motif. Cystine bridges form between Cys-102–Cys-112 and Cys-126–Cys-146.

The protein resides in the secreted. In terms of biological role, this is a thiol proteinase inhibitor. This is Cystatin-C (CST3) from Bos taurus (Bovine).